Consider the following 161-residue polypeptide: Large ribosomal subunit protein uL11 (161 aa).

Belongs to the universal ribosomal protein uL11 family. In terms of assembly, part of the ribosomal stalk of the 50S ribosomal subunit. Interacts with L10 and the large rRNA to form the base of the stalk. L10 forms an elongated spine to which L12 dimers bind in a sequential fashion forming a multimeric L10(L12)X complex.

Forms part of the ribosomal stalk which helps the ribosome interact with GTP-bound translation factors. This is Large ribosomal subunit protein uL11 from Methanococcoides burtonii (strain DSM 6242 / NBRC 107633 / OCM 468 / ACE-M).